A 376-amino-acid chain; its full sequence is Phosphoserine aminotransferase (376 aa).

Arg-54 is a binding site for L-glutamate. Residues 88–89 (AT), Trp-115, Thr-165, Asp-186, and Gln-209 contribute to the pyridoxal 5'-phosphate site. At Lys-210 the chain carries N6-(pyridoxal phosphate)lysine. 251–252 (NT) lines the pyridoxal 5'-phosphate pocket.

Belongs to the class-V pyridoxal-phosphate-dependent aminotransferase family. SerC subfamily. As to quaternary structure, homodimer. Requires pyridoxal 5'-phosphate as cofactor.

The protein resides in the cytoplasm. The catalysed reaction is O-phospho-L-serine + 2-oxoglutarate = 3-phosphooxypyruvate + L-glutamate. It carries out the reaction 4-(phosphooxy)-L-threonine + 2-oxoglutarate = (R)-3-hydroxy-2-oxo-4-phosphooxybutanoate + L-glutamate. Its pathway is amino-acid biosynthesis; L-serine biosynthesis; L-serine from 3-phospho-D-glycerate: step 2/3. The protein operates within cofactor biosynthesis; pyridoxine 5'-phosphate biosynthesis; pyridoxine 5'-phosphate from D-erythrose 4-phosphate: step 3/5. Catalyzes the reversible conversion of 3-phosphohydroxypyruvate to phosphoserine and of 3-hydroxy-2-oxo-4-phosphonooxybutanoate to phosphohydroxythreonine. The chain is Phosphoserine aminotransferase from Rhodopirellula baltica (strain DSM 10527 / NCIMB 13988 / SH1).